The chain runs to 47 residues: Delta-actitoxin-Ael1b (47 aa).

Disulfide bonds link C4/C44, C6/C34, and C27/C45.

It belongs to the sea anemone sodium channel inhibitory toxin family. Type I subfamily.

Its subcellular location is the secreted. The protein resides in the nematocyst. Functionally, produces a positive inotropic effect in mammalian heart muscle. Modifies current passing through the fast sodium channel (Nav) in neuroblastoma cells, leading to delayed and incomplete inactivation. Paralyzes the shore crab (C.maenas) by tetanic contractions after intramuscular injection. The polypeptide is Delta-actitoxin-Ael1b (Anthopleura elegantissima (Green aggregating anemone)).